The following is a 388-amino-acid chain: 5-hydroxytryptamine receptor 4 (388 aa).

Over 1-19 (MDKLDANVSSEEGFGSVEK) the chain is Extracellular. N-linked (GlcNAc...) asparagine glycosylation is present at N7. A helical membrane pass occupies residues 20-44 (VVLLTFLSTVILMAILGNLLVMVAV). At 45–54 (CWDRQLRKIK) the chain is on the cytoplasmic side. Residues 55–78 (TNYFIVSLAFADLLVSVLVMPFGA) form a helical membrane-spanning segment. The Extracellular portion of the chain corresponds to 79-92 (IELVQDIWIYGEVF). A helical transmembrane segment spans residues 93-117 (CLVRTSLDVLLTTASIFHLCCISLD). A disulfide bond links C93 and C184. D100 contributes to the serotonin binding site. Residues 118–133 (RYYAICCQPLVYRNKM) lie on the Cytoplasmic side of the membrane. The chain crosses the membrane as a helical span at residues 134 to 157 (TPLRIALMLGGCWVIPTFISFLPI). The Extracellular portion of the chain corresponds to 158–188 (MQGWNNIGIIDLIEKRKFNQNSNSTYCVFMV). The helical transmembrane segment at 189–212 (NKPYAITCSVVAFYIPFLLMVLAY) threads the bilayer. The Cytoplasmic segment spans residues 213 to 257 (YRIYVTAKEHAHQIQMLQRAGASSESRPQSADQHSTHRMRTETKA). A helical transmembrane segment spans residues 258–283 (AKTLCIIMGCFCLCWAPFFVTNIVDP). N279 lines the serotonin pocket. The Extracellular segment spans residues 284-290 (FIDYTVP). A helical membrane pass occupies residues 291-314 (GQVWTAFLWLGYINSGLNPFLYAF). The Cytoplasmic portion of the chain corresponds to 315 to 388 (LNKSFRRAFL…PLVAAQPSDT (74 aa)).

This sequence belongs to the G-protein coupled receptor 1 family. As to quaternary structure, interacts (via C-terminus 330-346 AA) with GRK5; this interaction is promoted by 5-HT (serotonin). In terms of assembly, interacts with MAGI2, MPP3, NHERF1 and SNX27 isoforms 1 and 2. Forms a complex including NHERF1 and EZR. Interacts with PATJ, NOS1 and SEC23A. In terms of tissue distribution, expressed in ileum, brain, and atrium, but not in the ventricle. As to expression, mainly expressed in atria and cardiac ventricle. Expressed in all cardiovascular tissues analyzed.

It localises to the cell membrane. Its subcellular location is the endosome membrane. Functionally, G-protein coupled receptor for 5-hydroxytryptamine (serotonin), a biogenic hormone that functions as a neurotransmitter, a hormone and a mitogen. Ligand binding causes a conformation change that triggers signaling via guanine nucleotide-binding proteins (G proteins) and modulates the activity of downstream effectors. HTR4 is coupled to G(s) G alpha proteins and mediates activation of adenylate cyclase activity. The sequence is that of 5-hydroxytryptamine receptor 4 from Homo sapiens (Human).